We begin with the raw amino-acid sequence, 123 residues long: Large ribosomal subunit protein bL12 (123 aa).

Belongs to the bacterial ribosomal protein bL12 family. Homodimer. Part of the ribosomal stalk of the 50S ribosomal subunit. Forms a multimeric L10(L12)X complex, where L10 forms an elongated spine to which 2 to 4 L12 dimers bind in a sequential fashion. Binds GTP-bound translation factors.

Forms part of the ribosomal stalk which helps the ribosome interact with GTP-bound translation factors. Is thus essential for accurate translation. The sequence is that of Large ribosomal subunit protein bL12 from Zymomonas mobilis subsp. mobilis (strain ATCC 31821 / ZM4 / CP4).